Reading from the N-terminus, the 250-residue chain is Transcriptional activator protein ExpR (250 aa).

The HTH luxR-type domain maps to 173–238 (KSQEADLFSQ…HAIRLGVEMN (66 aa)). The segment at residues 197-216 (YQEIALILGITTSTVKFHIG) is a DNA-binding region (H-T-H motif).

The protein belongs to the autoinducer-regulated transcriptional regulatory protein family.

Functions as an OHLL responsive transcriptional regulator that acts in virulence (soft rot disease) through the activation of genes for plant tissue macerating enzymes. In Dickeya dadantii (strain 3937) (Erwinia chrysanthemi (strain 3937)), this protein is Transcriptional activator protein ExpR (expR).